Reading from the N-terminus, the 229-residue chain is Uracil-DNA glycosylase (229 aa).

D64 (proton acceptor) is an active-site residue.

The protein belongs to the uracil-DNA glycosylase (UDG) superfamily. UNG family.

It is found in the cytoplasm. It carries out the reaction Hydrolyzes single-stranded DNA or mismatched double-stranded DNA and polynucleotides, releasing free uracil.. Excises uracil residues from the DNA which can arise as a result of misincorporation of dUMP residues by DNA polymerase or due to deamination of cytosine. This chain is Uracil-DNA glycosylase, found in Klebsiella pneumoniae subsp. pneumoniae (strain ATCC 700721 / MGH 78578).